Consider the following 144-residue polypeptide: Large ribosomal subunit protein uL16 (144 aa).

Residues 1–16 (MLVPKRVKHRKVQRGH) are compositionally biased toward basic residues. Residues 1–20 (MLVPKRVKHRKVQRGHMRGE) form a disordered region.

This sequence belongs to the universal ribosomal protein uL16 family. Part of the 50S ribosomal subunit.

Binds 23S rRNA and is also seen to make contacts with the A and possibly P site tRNAs. The protein is Large ribosomal subunit protein uL16 of Limosilactobacillus reuteri (strain DSM 20016) (Lactobacillus reuteri).